We begin with the raw amino-acid sequence, 47 residues long: Lysis protein for colicin E8 (47 aa).

The first 19 residues, 1–19 (MKKITGIILLLLAVIILAA), serve as a signal peptide directing secretion. Cysteine 20 carries N-palmitoyl cysteine lipidation. A lipid anchor (S-diacylglycerol cysteine) is attached at cysteine 20.

Its subcellular location is the cell outer membrane. Functionally, lysis proteins are required for both colicin release and partial cell lysis. In Escherichia coli, this protein is Lysis protein for colicin E8 (lys).